The following is a 371-amino-acid chain: Zinc finger CCCH domain-containing protein 21 (371 aa).

Residues 1 to 64 (MPPKQQPKAD…AAKKKKEEEK (64 aa)) are disordered. Residues 10–23 (DLAKKQKQVEDKTF) show a composition bias toward basic and acidic residues. Polar residues predominate over residues 34 to 46 (VQKYVQSLKQSVQ). C3H1-type zinc fingers lie at residues 88–115 (DPKS…HDLN) and 159–197 (KPTD…HALP). 2 coiled-coil regions span residues 205 to 237 (QMKA…ATQM) and 283 to 317 (FVDD…GTSK). The disordered stretch occupies residues 290 to 371 (CEEYEREREQ…IREPNDEGSS (82 aa)). The segment covering 292–312 (EYEREREQEETEQKAKNKEAE) has biased composition (basic and acidic residues). A compositionally biased stretch (acidic residues) spans 330–352 (NEEEEDDDDDDDDLDMDELDELE).

The chain is Zinc finger CCCH domain-containing protein 21 from Arabidopsis thaliana (Mouse-ear cress).